Consider the following 159-residue polypeptide: Protein Smg homolog (159 aa).

This sequence belongs to the Smg family.

In Nitrosococcus oceani (strain ATCC 19707 / BCRC 17464 / JCM 30415 / NCIMB 11848 / C-107), this protein is Protein Smg homolog.